An 89-amino-acid chain; its full sequence is Cornifin (89 aa).

A disordered region spans residues 1-29 (MSSQQQKQPCTPPPQLQQQQVKQPCQPPP). The residue at position 2 (Ser2) is an N-acetylserine. 8 tandem repeats follow at residues 3 to 14 (SQQQKQPCTPPP), 18 to 29 (QQQVKQPCQPPP), 31 to 38 (EPCIPKTK), 39 to 46 (EPCLPKVP), 47 to 54 (EPCHPKVP), 55 to 62 (EPCQPKVP), 63 to 70 (EPCHPKVP), and 71 to 78 (EPCPSTVT). Residues 3-29 (SQQQKQPCTPPPQLQQQQVKQPCQPPP) are 2 X 12 AA approximate repeats. The interval 31 to 78 (EPCIPKTKEPCLPKVPEPCHPKVPEPCQPKVPEPCHPKVPEPCPSTVT) is 6 X 8 AA approximate tandem repeats. The interval 68–89 (KVPEPCPSTVTPAPAQQKTKQK) is disordered. Over residues 75 to 89 (STVTPAPAQQKTKQK) the composition is skewed to polar residues.

It belongs to the cornifin (SPRR) family.

Its subcellular location is the cytoplasm. Functionally, cross-linked envelope protein of keratinocytes. It is a keratinocyte protein that first appears in the cell cytosol, but ultimately becomes cross-linked to membrane proteins by transglutaminase. All that results in the formation of an insoluble envelope beneath the plasma membrane. This chain is Cornifin (SPRR1), found in Macaca mulatta (Rhesus macaque).